The following is a 488-amino-acid chain: V-type proton ATPase subunit B 1 (488 aa).

This sequence belongs to the ATPase alpha/beta chains family. In terms of assembly, V-ATPase is a heteromultimeric enzyme composed of a peripheral catalytic V1 complex (main components: subunits A, B, C, D, E, and F) attached to an integral membrane V0 proton pore complex (main component: the proteolipid protein).

Functionally, non-catalytic subunit of the peripheral V1 complex of vacuolar ATPase. V-ATPase is responsible for acidifying a variety of intracellular compartments in eukaryotic cells. This chain is V-type proton ATPase subunit B 1, found in Gossypium hirsutum (Upland cotton).